The chain runs to 281 residues: Elongation factor Ts (281 aa).

Positions 80 to 83 are involved in Mg(2+) ion dislocation from EF-Tu; the sequence is TDFV.

It belongs to the EF-Ts family.

It localises to the cytoplasm. Associates with the EF-Tu.GDP complex and induces the exchange of GDP to GTP. It remains bound to the aminoacyl-tRNA.EF-Tu.GTP complex up to the GTP hydrolysis stage on the ribosome. The sequence is that of Elongation factor Ts from Aliivibrio fischeri (strain MJ11) (Vibrio fischeri).